A 246-amino-acid chain; its full sequence is Transcriptional regulatory protein LytR (246 aa).

Residues 2 to 116 (KALIIDDEPL…RIEQAVNKVR (115 aa)) enclose the Response regulatory domain. Residue D53 is modified to 4-aspartylphosphate. One can recognise an HTH LytTR-type domain in the interval 141–245 (LPVEIDDKIH…MKDFKASIGL (105 aa)).

In terms of assembly, homodimer; when phosphorylated. In terms of processing, phosphorylated and dephosphorylated by LytS.

The protein localises to the cytoplasm. Its function is as follows. Member of the two-component regulatory system LytR/LytS that regulates genes involved in autolysis, programmed cell death, biofilm formation and cell wall metabolism. Also participates in sensing and responding to host defense cationic antimicrobial peptides (HDPs). Upon phosphorylation by LytS, functions as a transcription regulator by direct binding to promoter regions of target genes including lrgA and lrgB, to positively regulate their expression. This is Transcriptional regulatory protein LytR (lytR) from Staphylococcus aureus (strain USA300).